The primary structure comprises 93 residues: Putative regulatory protein Fnod_1678 (93 aa).

Belongs to the RemA family.

In Fervidobacterium nodosum (strain ATCC 35602 / DSM 5306 / Rt17-B1), this protein is Putative regulatory protein Fnod_1678.